Reading from the N-terminus, the 169-residue chain is Dihydrofolate reductase type 8 (169 aa).

One can recognise a DHFR domain in the interval 3 to 169; the sequence is ELHAILAATA…FTYRKKELTE (167 aa).

This sequence belongs to the dihydrofolate reductase family. Homodimer.

It carries out the reaction (6S)-5,6,7,8-tetrahydrofolate + NADP(+) = 7,8-dihydrofolate + NADPH + H(+). It participates in cofactor biosynthesis; tetrahydrofolate biosynthesis; 5,6,7,8-tetrahydrofolate from 7,8-dihydrofolate: step 1/1. Functionally, key enzyme in folate metabolism. Catalyzes an essential reaction for de novo glycine and purine synthesis, and for DNA precursor synthesis. The chain is Dihydrofolate reductase type 8 (dhfrVIII) from Escherichia coli.